A 275-amino-acid polypeptide reads, in one-letter code: Elongation factor Ts (275 aa).

The tract at residues 76–79 (TDFV) is involved in Mg(2+) ion dislocation from EF-Tu.

The protein belongs to the EF-Ts family.

The protein localises to the cytoplasm. In terms of biological role, associates with the EF-Tu.GDP complex and induces the exchange of GDP to GTP. It remains bound to the aminoacyl-tRNA.EF-Tu.GTP complex up to the GTP hydrolysis stage on the ribosome. This chain is Elongation factor Ts, found in Corynebacterium glutamicum (strain ATCC 13032 / DSM 20300 / JCM 1318 / BCRC 11384 / CCUG 27702 / LMG 3730 / NBRC 12168 / NCIMB 10025 / NRRL B-2784 / 534).